A 610-amino-acid polypeptide reads, in one-letter code: DEAD-box ATP-dependent RNA helicase 9, mitochondrial (610 aa).

The transit peptide at 1-66 (MISTVLRRSI…SSPFGVKVRD (66 aa)) directs the protein to the mitochondrion. Positions 116–144 (LAIADLGISPEIVKALKGRGIEKLFPIQK) match the Q motif motif. One can recognise a Helicase ATP-binding domain in the interval 147–321 (LEPAMEGRDM…KKYLNNPLTI (175 aa)). 160–167 (ARTGTGKT) serves as a coordination point for ATP. Positions 269–272 (DEAD) match the DEAD box motif. The Helicase C-terminal domain occupies 350–494 (IIGPLVKEHG…ELPSIAVERG (145 aa)). The segment covering 542 to 557 (SGRSGGGGGSYGGSGG) has biased composition (gly residues). Residues 542–610 (SGRSGGGGGS…FGSNDGKRSY (69 aa)) are disordered. Over residues 558-572 (SSSRYSGGSDRSSGF) the composition is skewed to low complexity. The span at 573 to 585 (GSFGSGGSSGGFG) shows a compositional bias: gly residues. The segment covering 586 to 596 (SDRSSQSSGRS) has biased composition (low complexity).

This sequence belongs to the DEAD box helicase family. DDX21/DDX50 subfamily.

It is found in the mitochondrion. The enzyme catalyses ATP + H2O = ADP + phosphate + H(+). In Arabidopsis thaliana (Mouse-ear cress), this protein is DEAD-box ATP-dependent RNA helicase 9, mitochondrial (RH9).